Reading from the N-terminus, the 337-residue chain is Vacuolar protein sorting-associated protein 26B-A (337 aa).

Residues Arg-313–Glu-337 form a disordered region.

Belongs to the VPS26 family. As to quaternary structure, component of the heterotrimeric retromer cargo-selective complex (CSC) which is believed to associate with variable sorting nexins to form functionally distinct retromer complex variants.

It is found in the cytoplasm. The protein resides in the endosome membrane. It localises to the early endosome. In terms of biological role, acts as a component of the retromer cargo-selective complex (CSC). The CSC is believed to be the core functional component of retromer or respective retromer complex variants acting to prevent missorting of selected transmembrane cargo proteins into the lysosomal degradation pathway. Retromer mediates retrograde transport of cargo proteins from endosomes to the trans-Golgi network (TGN). In Xenopus laevis (African clawed frog), this protein is Vacuolar protein sorting-associated protein 26B-A (vps26b-a).